Consider the following 122-residue polypeptide: Large ribosomal subunit protein uL18 (122 aa).

It belongs to the universal ribosomal protein uL18 family. In terms of assembly, part of the 50S ribosomal subunit; part of the 5S rRNA/L5/L18/L25 subcomplex. Contacts the 5S and 23S rRNAs.

Functionally, this is one of the proteins that bind and probably mediate the attachment of the 5S RNA into the large ribosomal subunit, where it forms part of the central protuberance. This is Large ribosomal subunit protein uL18 from Geotalea uraniireducens (strain Rf4) (Geobacter uraniireducens).